The sequence spans 351 residues: UDP-3-O-acylglucosamine N-acyltransferase (351 aa).

Histidine 257 functions as the Proton acceptor in the catalytic mechanism.

Belongs to the transferase hexapeptide repeat family. LpxD subfamily. In terms of assembly, homotrimer.

It carries out the reaction a UDP-3-O-[(3R)-3-hydroxyacyl]-alpha-D-glucosamine + a (3R)-hydroxyacyl-[ACP] = a UDP-2-N,3-O-bis[(3R)-3-hydroxyacyl]-alpha-D-glucosamine + holo-[ACP] + H(+). It participates in bacterial outer membrane biogenesis; LPS lipid A biosynthesis. Catalyzes the N-acylation of UDP-3-O-acylglucosamine using 3-hydroxyacyl-ACP as the acyl donor. Is involved in the biosynthesis of lipid A, a phosphorylated glycolipid that anchors the lipopolysaccharide to the outer membrane of the cell. This chain is UDP-3-O-acylglucosamine N-acyltransferase, found in Methylorubrum extorquens (strain CM4 / NCIMB 13688) (Methylobacterium extorquens).